A 321-amino-acid chain; its full sequence is Chlorohydroquinone/hydroquinone 1,2-dioxygenase (321 aa).

VOC domains follow at residues 10 to 138 and 160 to 282; these read GLHH…IIEQ and GFHS…ASVT. Residues histidine 162, histidine 229, and glutamate 278 each coordinate Fe cation.

The protein belongs to the extradiol ring-cleavage dioxygenase family. Requires Fe(2+) as cofactor.

The enzyme catalyses hydroquinone + O2 = (2E,4Z)-4-hydroxy-6-oxohexa-2,4-dienoate + H(+). It carries out the reaction chlorohydroquinone + O2 = 5-chlorocarbonyl-4-hydroxy-penta-2,4-dienoate + H(+). It participates in xenobiotic degradation; gamma-hexachlorocyclohexane degradation. Its function is as follows. Cleaves aromatic rings with two hydroxyl groups at para positions with consumption of O(2). Catalyzes the cleavage of chlorohydroquinone (CHQ), as part of the gamma-hexachlorocyclohexane (gamma-HCH or lindane) degradation pathway, producing 5-chlorocarbonyl-4-hydroxy-penta-2,4-dienoate as an intermediate product that can react with water yielding maleylacetate. This degradation pathway allows S.japonicum UT26 to grow on gamma-HCH as the sole source of carbon and energy. Can also use hydroquinone (HQ) as substrate, leading to gamma-hydroxymuconic semialdehyde. Is not able to convert catechol, contrary to meta-cleavage dioxygenases. The chain is Chlorohydroquinone/hydroquinone 1,2-dioxygenase from Sphingobium indicum (strain DSM 16413 / CCM 7287 / MTCC 6362 / UT26 / NBRC 101211 / UT26S) (Sphingobium japonicum).